A 975-amino-acid chain; its full sequence is MAAEEVLQTVDHYKTEIERLTKELTETTHEKIQAAEYGLVVLEEKLTLKQQYDELEAEYDSLKQELEQLKEAFGQSFSIHRKVAEDGETREETLLQESASKEAYYLGKILEMQNELKQSRAVVTNVQAENERLTAVVQDLKENNEMVELQRIRMKDEIREYKFREARLLQDYTELEEENITLQKLVSTLKQNQVEYEGLKHEIKRFEEETVLLNSQLEDAIRLKEIAEHQLEEALETLKNEREQKNNLRKELSQYISLNDNHISISVDGLKFAEDGSEPNNDDKMNGHIHGPLVKLNGDYRTPTLRKGESLNPVSDLFSELNISEIQKLKQQLMQVEREKAILLANLQESQTQLEHTKGALTEQHERVHRLTEHVNAMRGLQSSKELKAELDGEKGRDSGEEAHDYEVDINGLEILECKYRVAVTEVIDLKAEIKALKEKYNKSVENYTDEKAKYESKIQMYDEQVTSLEKTTKESGEKMAHMEKELQKMTSIANENHSTLNTAQDELVTFSEELAQLYHHVCLCNNETPNRVMLDYYRQSRVTRSGSLKGPDDPRGLLSPRLARRGVSSPVETRTSSEPVAKESTEASKEPSPTKTPTISPVITAPPSSPVLDTSDIRKEPMNIYNLNAIIRDQIKHLQKAVDRSLQLSRQRAAARELAPMIDKDKEALMEEILKLKSLLSTKREQIATLRAVLKANKQTAEVALANLKNKYENEKAMVTETMTKLRNELKALKEDAATFSSLRAMFATRCDEYVTQLDEMQRQLAAAEDEKKTLNTLLRMAIQQKLALTQRLEDLEFDHEQSRRSKGKLGKSKIGSPKVSGEASVTVPTIDTYLLHSQGPQTPNIRVSSGTQRKRQFSPSLCDQSRPRTSGASYLQNLLRVPPDPTSTESFLLKGPPSMSEFIQGHRLSKEKRLTVAPPDCQQPAASVPPQCSQLAGRQDCPTVSPDTALPEEQPHSSSQCAPLHCLSKPPHP.

Coiled coils occupy residues 1–265 (MAAE…HISI) and 319–496 (SELN…IANE). Disordered stretches follow at residues 383 to 403 (SSKELKAELDGEKGRDSGEEA), 545 to 616 (RSGS…LDTS), 800 to 824 (DHEQSRRSKGKLGKSKIGSPKVSGE), 836 to 877 (LLHS…ASYL), and 922 to 975 (DCQQ…PPHP). Composition is skewed to basic and acidic residues over residues 385–403 (KELKAELDGEKGRDSGEEA) and 581–590 (VAKESTEASK). Residues 592–602 (PSPTKTPTISP) are compositionally biased toward polar residues. A coiled-coil region spans residues 663–803 (IDKDKEALME…LEDLEFDHEQ (141 aa)). Residues 663–803 (IDKDKEALME…LEDLEFDHEQ (141 aa)) are interaction with RAB6A. Residues 840-877 (QGPQTPNIRVSSGTQRKRQFSPSLCDQSRPRTSGASYL) show a composition bias toward polar residues.

Belongs to the BicD family. As to quaternary structure, interacts with RAB6A. Interacts (via C-terminus) with RAB6B (GTP-bound); the interaction is direct. Interacts with CLIP-115 and KIFC2. (Microbial infection) Interacts with human cytomegalovirus/HHV-5 protein UL32. In terms of tissue distribution, expressed in the brain, heart and skeletal muscle.

The protein localises to the golgi apparatus. In terms of biological role, regulates coat complex coatomer protein I (COPI)-independent Golgi-endoplasmic reticulum transport by recruiting the dynein-dynactin motor complex. This chain is Protein bicaudal D homolog 1 (BICD1), found in Homo sapiens (Human).